An 886-amino-acid polypeptide reads, in one-letter code: Cytosolic carboxypeptidase-like protein 5 (886 aa).

In terms of domain architecture, Peptidase M14 spans 157-570 (YPFSYSDCQD…AMAIAALDMA (414 aa)). Residues His252 and Glu255 each coordinate Zn(2+). The segment covering 344 to 353 (AKSPTNQQPT) has biased composition (polar residues). Disordered regions lie at residues 344 to 363 (AKSP…APLS) and 374 to 401 (EAHL…KTDP). His434 is a Zn(2+) binding site. Glu516 acts as the Proton donor/acceptor in catalysis. 2 disordered regions span residues 602-737 (GLTS…RNMG) and 783-846 (TRLQ…PAFS). Positions 621–635 (PKSNNSLPVSCSENA) are enriched in polar residues. Positions 643 to 654 (STGTSTGGSSSS) are enriched in low complexity. Positions 655–666 (QQNSPQMKNSPS) are enriched in polar residues. Residues 714 to 737 (STTSSLAPSPTLASSGPTSSRNMG) show a composition bias toward low complexity. A compositionally biased stretch (polar residues) spans 805-815 (SSPTSPIPQTR). Ser841 bears the Phosphoserine mark.

Belongs to the peptidase M14 family. Zn(2+) serves as cofactor. In terms of tissue distribution, widely expressed. Highly expressed in testis, and moderately in pituitary, brain, eye and kidney.

The protein resides in the cytoplasm. The protein localises to the cytosol. It localises to the nucleus. Its subcellular location is the cytoskeleton. It is found in the spindle. The protein resides in the midbody. It catalyses the reaction gamma-L-glutamyl-L-glutamyl-[protein] + H2O = L-glutamyl-[protein] + L-glutamate. The enzyme catalyses (L-glutamyl)(n+1)-gamma-L-glutamyl-L-glutamyl-[protein] + H2O = (L-glutamyl)(n)-gamma-L-glutamyl-L-glutamyl-[protein] + L-glutamate. It carries out the reaction C-terminal L-alpha-aminoacyl-L-glutamyl-[tubulin] + H2O = C-terminal L-alpha-aminoacyl-[tubulin] + L-glutamate. The catalysed reaction is C-terminal L-alpha-aminoacyl-L-glutamyl-L-glutamyl-[tubulin] + H2O = C-terminal L-alpha-aminoacyl-L-glutamyl-[tubulin] + L-glutamate. Its function is as follows. Metallocarboxypeptidase that mediates deglutamylation of tubulin and non-tubulin target proteins. Catalyzes the removal of polyglutamate side chains present on the gamma-carboxyl group of glutamate residues within the C-terminal tail of alpha- and beta-tubulin. Cleaves alpha- and gamma-linked polyglutamate tubulin side-chain, as well as the branching point glutamate. Also catalyzes the removal of alpha-linked glutamate residues from the carboxy-terminus of alpha-tubulin. Mediates deglutamylation of nucleotidyltransferase CGAS, leading to CGAS antiviral defense response activation. In Mus musculus (Mouse), this protein is Cytosolic carboxypeptidase-like protein 5.